A 462-amino-acid chain; its full sequence is Cysteine--tRNA ligase (462 aa).

Cysteine 30 is a binding site for Zn(2+). Positions 32–42 match the 'HIGH' region motif; sequence MTVYDYCHIGH. Zn(2+) is bound by residues cysteine 214, histidine 239, and glutamate 243. Residues 271 to 275 carry the 'KMSKS' region motif; sequence KMSKS. Lysine 274 lines the ATP pocket.

It belongs to the class-I aminoacyl-tRNA synthetase family. Monomer. Zn(2+) serves as cofactor.

It is found in the cytoplasm. It carries out the reaction tRNA(Cys) + L-cysteine + ATP = L-cysteinyl-tRNA(Cys) + AMP + diphosphate. The sequence is that of Cysteine--tRNA ligase from Herminiimonas arsenicoxydans.